The chain runs to 391 residues: 12-oxophytodienoate reductase 3 (391 aa).

Position 1 is an N-acetylmethionine (Met1). The residue at position 2 (Thr2) is an N-acetylthreonine; in 12-oxophytodienoate reductase 3, N-terminally processed. Residues 31–33, Gly64, and Gln106 each bind FMN; that span reads PMT. His186 is a substrate binding site. Catalysis depends on Tyr191, which acts as the Proton donor. Arg238 provides a ligand contact to FMN. Substrate is bound at residue Arg284. Residues 320–322 and 343–344 contribute to the FMN site; these read SGG and GR. A Microbody targeting signal motif is present at residues 389-391; that stretch reads SRL.

It belongs to the NADH:flavin oxidoreductase/NADH oxidase family. FMN serves as cofactor. In terms of tissue distribution, expressed in green seedling, leaves, flowers (anthers, pistil, petal and stamen), and to a lower extent in roots and siliques. Specifically expressed in filament during anther dehiscence initiation.

The protein resides in the peroxisome. The catalysed reaction is (1S,2S)-OPC-8 + NADP(+) = (9S,13S,15Z)-12-oxophyto-10,15-dienoate + NADPH + H(+). The protein operates within lipid metabolism; oxylipin biosynthesis. Functionally, specifically cleaves olefinic bonds in cyclic enones. Involved in the biosynthesis of jasmonic acid (JA) and perhaps in biosynthesis or metabolism of other oxylipin signaling moleclules. Required for the spatial and temporal regulation of JA levels during dehiscence of anthers, promoting the stomium degeneration program. In vitro, reduces 9S,13S-12-oxophytodienoic acid (9S,13S-OPDA) and 9R,13R-OPDA to 9S,13S-OPC-8:0 and 9R,13R-OPC-8:0, respectively. Can detoxify the explosive 2,4,6-trinitrotoluene (TNT) in vitro by catalyzing its nitroreduction to form hydroxylamino-dinitrotoluene (HADNT). The chain is 12-oxophytodienoate reductase 3 from Arabidopsis thaliana (Mouse-ear cress).